Here is a 1043-residue protein sequence, read N- to C-terminus: Isoleucine--tRNA ligase (1043 aa).

P46 and H57 together coordinate L-isoleucyl-5'-AMP. The short motif at 47–57 (PTANGLPHVGH) is the 'HIGH' region element. Positions 181 and 184 each coordinate Zn(2+). The L-valine site is built by H319 and D328. Positions 389, 392, 461, 464, 502, and 504 each coordinate Zn(2+). Residues E550, G551, D553, Q554, and H581 each contribute to the L-isoleucyl-5'-AMP site. The 'KMSKS' region motif lies at 591–595 (KMSKS). K594 contributes to the ATP binding site.

Belongs to the class-I aminoacyl-tRNA synthetase family. IleS type 2 subfamily. Monomer. It depends on Zn(2+) as a cofactor.

The protein resides in the cytoplasm. It catalyses the reaction tRNA(Ile) + L-isoleucine + ATP = L-isoleucyl-tRNA(Ile) + AMP + diphosphate. Its function is as follows. Catalyzes the attachment of isoleucine to tRNA(Ile). As IleRS can inadvertently accommodate and process structurally similar amino acids such as valine, to avoid such errors it has two additional distinct tRNA(Ile)-dependent editing activities. One activity is designated as 'pretransfer' editing and involves the hydrolysis of activated Val-AMP. The other activity is designated 'posttransfer' editing and involves deacylation of mischarged Val-tRNA(Ile). This Thermus thermophilus (strain ATCC 27634 / DSM 579 / HB8) protein is Isoleucine--tRNA ligase (ileS).